We begin with the raw amino-acid sequence, 353 residues long: Glucose import ATP-binding protein GlcV (353 aa).

The region spanning 4–241 (IIVKNVSKVF…PVSIQVASLI (238 aa)) is the ABC transporter domain. ATP is bound by residues 40–46 (SGAGKTT), Q89, and E166.

Belongs to the ABC transporter superfamily. The complex is composed of two ATP-binding proteins (GlcV), two transmembrane proteins (GlcT and GlcU) and a solute-binding protein (GlcS). Forms transient head-to-tail homodimers in the presence of ATP-Mg(2+).

The protein localises to the cell membrane. It catalyses the reaction D-glucose(out) + ATP + H2O = D-glucose(in) + ADP + phosphate + H(+). Its function is as follows. Part of the ABC transporter complex GlcSTUV involved in glucose uptake. Responsible for energy coupling to the transport system. In vitro, as a free subunit, exhibits a constitutive ATPase activity. The polypeptide is Glucose import ATP-binding protein GlcV (Saccharolobus solfataricus (strain ATCC 35092 / DSM 1617 / JCM 11322 / P2) (Sulfolobus solfataricus)).